The primary structure comprises 103 residues: Large ribosomal subunit protein bL21 (103 aa).

This sequence belongs to the bacterial ribosomal protein bL21 family. Part of the 50S ribosomal subunit. Contacts protein L20.

Its function is as follows. This protein binds to 23S rRNA in the presence of protein L20. This chain is Large ribosomal subunit protein bL21, found in Shewanella piezotolerans (strain WP3 / JCM 13877).